A 478-amino-acid polypeptide reads, in one-letter code: ATP synthase subunit beta (478 aa).

151–158 (GGAGVGKT) contributes to the ATP binding site.

The protein belongs to the ATPase alpha/beta chains family. In terms of assembly, F-type ATPases have 2 components, CF(1) - the catalytic core - and CF(0) - the membrane proton channel. CF(1) has five subunits: alpha(3), beta(3), gamma(1), delta(1), epsilon(1). CF(0) has three main subunits: a(1), b(2) and c(9-12). The alpha and beta chains form an alternating ring which encloses part of the gamma chain. CF(1) is attached to CF(0) by a central stalk formed by the gamma and epsilon chains, while a peripheral stalk is formed by the delta and b chains.

The protein resides in the cell inner membrane. It catalyses the reaction ATP + H2O + 4 H(+)(in) = ADP + phosphate + 5 H(+)(out). Functionally, produces ATP from ADP in the presence of a proton gradient across the membrane. The catalytic sites are hosted primarily by the beta subunits. This is ATP synthase subunit beta from Xanthobacter autotrophicus (strain ATCC BAA-1158 / Py2).